We begin with the raw amino-acid sequence, 218 residues long: MNATSTPSLPYDANRLRELAHLLIGTIGEFAQAGWTPATSSNFSHRLDEHHVAITVSGRDKRCLTEEDIMAVDLEGNAVGHPHTPSAETLLHTQLYRRFPEIGCVLHTHSLTQTVASRVYAGAGHISLKDYELLKAFEGHSTHETTLDVPVFCNTQNMNILAAQVDTLLDKQRMWGYLINGHGMYTWGNTLADARRHLEALEFLLHCELNLLKLRGYL.

Residues H107 and H109 each contribute to the Zn(2+) site.

This sequence belongs to the aldolase class II family. MtnB subfamily. The cofactor is Zn(2+).

The catalysed reaction is 5-(methylsulfanyl)-D-ribulose 1-phosphate = 5-methylsulfanyl-2,3-dioxopentyl phosphate + H2O. Its pathway is amino-acid biosynthesis; L-methionine biosynthesis via salvage pathway; L-methionine from S-methyl-5-thio-alpha-D-ribose 1-phosphate: step 2/6. In terms of biological role, catalyzes the dehydration of methylthioribulose-1-phosphate (MTRu-1-P) into 2,3-diketo-5-methylthiopentyl-1-phosphate (DK-MTP-1-P). The chain is Methylthioribulose-1-phosphate dehydratase from Xylella fastidiosa (strain 9a5c).